The following is a 109-amino-acid chain: MKIRPGENLSRLTNMKKLSQNLIHNVTSIMTVSDINYLLLYLIILLTLSIKQPEKKNRKERTSCILSYYRIASLSMQNGGVPLCFVVLDCRLDSVFCKHGTMQFYWRKT.

Residues 26-48 (VTSIMTVSDINYLLLYLIILLTL) traverse the membrane as a helical segment.

The protein localises to the membrane. This is an uncharacterized protein from Saccharomyces cerevisiae (strain ATCC 204508 / S288c) (Baker's yeast).